The primary structure comprises 417 residues: NADH-quinone oxidoreductase subunit D (417 aa).

This sequence belongs to the complex I 49 kDa subunit family. As to quaternary structure, NDH-1 is composed of 14 different subunits. Subunits NuoB, C, D, E, F, and G constitute the peripheral sector of the complex.

The protein localises to the cell inner membrane. The catalysed reaction is a quinone + NADH + 5 H(+)(in) = a quinol + NAD(+) + 4 H(+)(out). In terms of biological role, NDH-1 shuttles electrons from NADH, via FMN and iron-sulfur (Fe-S) centers, to quinones in the respiratory chain. The immediate electron acceptor for the enzyme in this species is believed to be ubiquinone. Couples the redox reaction to proton translocation (for every two electrons transferred, four hydrogen ions are translocated across the cytoplasmic membrane), and thus conserves the redox energy in a proton gradient. The sequence is that of NADH-quinone oxidoreductase subunit D from Cupriavidus metallidurans (strain ATCC 43123 / DSM 2839 / NBRC 102507 / CH34) (Ralstonia metallidurans).